Reading from the N-terminus, the 464-residue chain is Probable acid phosphatase DDB_G0284753 (464 aa).

Positions 1-29 (MFSYFRKSQQKVEENQNGGGGDGRGSGIK) are disordered. Over residues 17–26 (NGGGGDGRGS) the composition is skewed to gly residues. H81 serves as the catalytic Nucleophile. Positions 180 to 202 (SFTDEQEKSPHHSSFLVKPDNEE) are disordered. Residue D347 is the Proton donor of the active site.

The protein belongs to the histidine acid phosphatase family.

It carries out the reaction a phosphate monoester + H2O = an alcohol + phosphate. The protein is Probable acid phosphatase DDB_G0284753 of Dictyostelium discoideum (Social amoeba).